The chain runs to 295 residues: Nucleotide-binding protein YjiE (295 aa).

12–19 (GMSGAGKT) is a binding site for ATP. Residue 63 to 66 (DMRS) participates in GTP binding.

This sequence belongs to the RapZ-like family.

In terms of biological role, displays ATPase and GTPase activities. The polypeptide is Nucleotide-binding protein YjiE (yjiE) (Lactococcus lactis subsp. lactis (strain IL1403) (Streptococcus lactis)).